A 700-amino-acid chain; its full sequence is ATP-dependent DNA helicase UvrD2 (700 aa).

Positions 10-301 (AGLDDQQREA…VRLERDYRST (292 aa)) constitute a UvrD-like helicase ATP-binding domain. Residues 34–39 (GTGKTR) and Arg299 each bind ATP. Residues 302–553 (PQVVSLANRV…LYVGITRARV (252 aa)) form the UvrD-like helicase C-terminal domain. The tract at residues 565–595 (PGGRQSRKPSRFLNGIAPQTRADPVPGTSRR) is disordered. The 75-residue stretch at 626–700 (ADVDEELLLQ…DVLQLVRGRT (75 aa)) folds into the HRDC domain.

It belongs to the helicase family. UvrD subfamily. The cofactor is Mg(2+).

It catalyses the reaction Couples ATP hydrolysis with the unwinding of duplex DNA by translocating in the 3'-5' direction.. The enzyme catalyses ATP + H2O = ADP + phosphate + H(+). In terms of biological role, DNA-dependent ATPase, stimulated equally by ss- and dsDNA. Has both ATPase and helicase activities. This Mycobacterium bovis (strain ATCC BAA-935 / AF2122/97) protein is ATP-dependent DNA helicase UvrD2 (uvrD2).